The chain runs to 145 residues: Antimicrobial peptide NK-lysin (145 aa).

A signal peptide spans 1–22 (MTSRALLLLASALLGTPGLTFS). A propeptide spanning residues 23-62 (GLNPESYDLATAHLSDGEQFCQGLTQEDLQGDLLTERERQ) is cleaved from the precursor. A Saposin B-type domain is found at 62–142 (QGIACWSCRK…VDIKLCKHKA (81 aa)). Intrachain disulfides connect cysteine 66–cysteine 138, cysteine 69–cysteine 132, and cysteine 97–cysteine 107. Residues 141-145 (KAGLI) constitute a propeptide that is removed on maturation.

Its subcellular location is the secreted. Its function is as follows. May be an effector molecule of cytotoxic activity. Has antimicrobial activity. The sequence is that of Antimicrobial peptide NK-lysin (NKL) from Equus caballus (Horse).